The sequence spans 244 residues: Reticulon-like protein B7 (244 aa).

In terms of domain architecture, Reticulon spans 70–244; that stretch reads PADVLLWRDK…EAKFLSKIPH (175 aa). 3 helical membrane-spanning segments follow: residues 80-100, 103-123, and 172-192; these read KVTL…GFGG, LLTS…LWSN, and FVMA…FSFL.

The protein resides in the endoplasmic reticulum membrane. The chain is Reticulon-like protein B7 (RTNLB7) from Arabidopsis thaliana (Mouse-ear cress).